Consider the following 240-residue polypeptide: Glutathione S-transferase theta-1 (240 aa).

The GST N-terminal domain occupies 2-82; it reads VLELYLDLLS…YLAHKYKVPD (81 aa). Residues His-40, 53–54, and 66–67 contribute to the glutathione site; these read RV and ES. Residues 88-222 enclose the GST C-terminal domain; the sequence is DLQARARVDE…VILKVKDCPP (135 aa).

Belongs to the GST superfamily. Theta family. Homodimer. As to expression, in liver, highest expression found in central vein limiting plate hepatocytes. Also expressed in interlobular bile duct epithelial cells. In lung, expressed in club cells and ciliated cells of the bronchiolar epithelium and in type II alveolar cells of the lung parenchyma.

Its subcellular location is the cytoplasm. It localises to the nucleus. It catalyses the reaction RX + glutathione = an S-substituted glutathione + a halide anion + H(+). Conjugation of reduced glutathione to a wide number of exogenous and endogenous hydrophobic electrophiles. Also binds steroids, bilirubin, carcinogens and numerous organic anions. Has dichloromethane dehalogenase activity. The sequence is that of Glutathione S-transferase theta-1 (Gstt1) from Mus musculus (Mouse).